Reading from the N-terminus, the 430-residue chain is Enolase (430 aa).

Position 163 (Gln-163) interacts with (2R)-2-phosphoglycerate. Glu-205 functions as the Proton donor in the catalytic mechanism. The Mg(2+) site is built by Asp-242, Glu-287, and Asp-314. (2R)-2-phosphoglycerate-binding residues include Lys-339, Arg-368, Ser-369, and Lys-390. Residue Lys-339 is the Proton acceptor of the active site.

Belongs to the enolase family. Mg(2+) is required as a cofactor.

The protein localises to the cytoplasm. The protein resides in the secreted. It localises to the cell surface. It catalyses the reaction (2R)-2-phosphoglycerate = phosphoenolpyruvate + H2O. The protein operates within carbohydrate degradation; glycolysis; pyruvate from D-glyceraldehyde 3-phosphate: step 4/5. Functionally, catalyzes the reversible conversion of 2-phosphoglycerate (2-PG) into phosphoenolpyruvate (PEP). It is essential for the degradation of carbohydrates via glycolysis. The protein is Enolase of Geobacillus kaustophilus (strain HTA426).